Consider the following 169-residue polypeptide: Oleosin Cor a 15 (169 aa).

Transmembrane regions (helical) follow at residues 38–58 (IAVVTLLPLGGFLLLLAGLTF) and 70–90 (PLFVLCSPVLVPAAIVIGLAV). A Proline-knot motif is present at residues 70-81 (PLFVLCSPVLVP). 2 stretches are compositionally biased toward basic and acidic residues: residues 122–131 (QMEHAKRRAQ) and 160–169 (EGGRGEEKKT). The tract at residues 122-169 (QMEHAKRRAQDTAGHLGQKARETGQTVTGKGQEAGKTLEGGRGEEKKT) is disordered.

Belongs to the oleosin family. Expressed in seeds (at protein level).

Its subcellular location is the lipid droplet. The protein localises to the membrane. Its function is as follows. May have a structural role to stabilize the lipid body during desiccation of the seed by preventing coalescence of the oil. Probably interacts with both lipid and phospholipid moieties of lipid bodies. May also provide recognition signals for specific lipase anchorage in lipolysis during seedling growth. The polypeptide is Oleosin Cor a 15 (Corylus avellana (European hazel)).